The following is a 382-amino-acid chain: 6-oxocyclohex-1-ene-1-carbonyl-CoA hydrolase (382 aa).

Belongs to the enoyl-CoA hydratase/isomerase family. In terms of assembly, homohexamer.

It carries out the reaction 6-oxocyclohex-1-ene-1-carbonyl-CoA + 2 H2O = 3-hydroxy-6-carboxyhexanoyl-CoA + H(+). The protein operates within aromatic compound metabolism; benzoyl-CoA degradation. Involved in the central benzoyl-CoA catabolism. Catalyzes the addition of one molecule of water to the double bond and the hydrolytic cleavage of C-C bond in the alicyclic ring, 6-oxocyclohex-1-ene-1-carbonyl-CoA (6-OCH-CoA) to yield 3-hydroxypimelyl-CoA. The chain is 6-oxocyclohex-1-ene-1-carbonyl-CoA hydrolase from Syntrophus aciditrophicus (strain SB).